Reading from the N-terminus, the 176-residue chain is Large ribosomal subunit protein uL6 (176 aa).

The segment covering 151–170 has biased composition (basic and acidic residues); the sequence is RPPEPYKGKGVRYADEQVRR. The tract at residues 151–176 is disordered; it reads RPPEPYKGKGVRYADEQVRRKEAKKK.

This sequence belongs to the universal ribosomal protein uL6 family. As to quaternary structure, part of the 50S ribosomal subunit.

Its function is as follows. This protein binds to the 23S rRNA, and is important in its secondary structure. It is located near the subunit interface in the base of the L7/L12 stalk, and near the tRNA binding site of the peptidyltransferase center. The sequence is that of Large ribosomal subunit protein uL6 from Shewanella pealeana (strain ATCC 700345 / ANG-SQ1).